The primary structure comprises 341 residues: Small ribosomal subunit biogenesis GTPase RsgA (341 aa).

One can recognise a CP-type G domain in the interval 112–268 (RQQLIAANLD…LIDTPGMREL (157 aa)). Residues 157–160 (TKVD) and 210–218 (GSSGAGKST) each bind GTP. Zn(2+) is bound by residues Cys290, Cys295, His297, and Cys303.

This sequence belongs to the TRAFAC class YlqF/YawG GTPase family. RsgA subfamily. In terms of assembly, monomer. Associates with 30S ribosomal subunit, binds 16S rRNA. Zn(2+) is required as a cofactor.

It is found in the cytoplasm. In terms of biological role, one of several proteins that assist in the late maturation steps of the functional core of the 30S ribosomal subunit. Helps release RbfA from mature subunits. May play a role in the assembly of ribosomal proteins into the subunit. Circularly permuted GTPase that catalyzes slow GTP hydrolysis, GTPase activity is stimulated by the 30S ribosomal subunit. The protein is Small ribosomal subunit biogenesis GTPase RsgA of Xylella fastidiosa (strain Temecula1 / ATCC 700964).